A 1241-amino-acid chain; its full sequence is High-affinity potassium transport protein (1241 aa).

2 consecutive transmembrane segments (helical) span residues 49–70 (NFIA…ILLY) and 78–98 (IDAL…TVDV). A glycan (N-linked (GlcNAc...) asparagine) is linked at asparagine 100. Residues 107 to 127 (IILYIICCISTPIAVHSCLAF) traverse the membrane as a helical segment. Disordered stretches follow at residues 162 to 241 (TART…SLDD), 253 to 316 (KYHG…TPED), and 329 to 570 (EGTA…QLQQ). Polar residues predominate over residues 164–177 (RTMTKSKTGGTQRV). Composition is skewed to basic and acidic residues over residues 181–191 (GKSDKRDDFQE) and 199–214 (VNRD…HNSR). The span at 215–238 (DSNSNANTNSSNNNSINHNGSSGS) shows a compositional bias: low complexity. N-linked (GlcNAc...) asparagine glycosylation is found at asparagine 223, asparagine 227, asparagine 233, asparagine 257, asparagine 274, asparagine 353, and asparagine 364. Polar residues-rich tracts occupy residues 268–280 (NTAT…QKLK) and 345–365 (TDGT…TMNE). The segment covering 366–375 (SKIRIQDKGA) has biased composition (basic and acidic residues). Over residues 380–411 (DQDSVLHSSNSSACTSDEDSLPTNFGGTTPSL) the composition is skewed to polar residues. N-linked (GlcNAc...) asparagine glycans are attached at residues asparagine 389 and asparagine 442. Composition is skewed to basic residues over residues 446–455 (PPRKASKSKR) and 482–497 (HLPK…KRRL). Residues 498-509 (STGSIDKNSSSD) are compositionally biased toward polar residues. Residues asparagine 505 and asparagine 538 are each glycosylated (N-linked (GlcNAc...) asparagine). A compositionally biased stretch (acidic residues) spans 520-545 (NDDDDGNEGDNMEEYFADNESGDEDD). Positions 561 to 570 (KQQQQHQLQQ) are enriched in low complexity. N-linked (GlcNAc...) asparagine glycosylation is found at asparagine 584, asparagine 660, asparagine 681, asparagine 691, and asparagine 741. The segment at 677 to 714 (NSHRNGSEDVSSDSNETTYPLNGNNDHSQNDANGYPTY) is disordered. The span at 684–708 (EDVSSDSNETTYPLNGNNDHSQNDA) shows a compositional bias: polar residues. The next 5 helical transmembrane spans lie at 784–806 (ILVV…WINL), 819–840 (VSPT…GLTL), 844–864 (SMMS…FIII), 868–888 (GFPI…PDLS), and 904–924 (CFTL…LVGL). Asparagine 925 carries an N-linked (GlcNAc...) asparagine glycan. 2 helical membrane-spanning segments follow: residues 929–949 (WILF…SKGY) and 977–997 (SIQV…AISI). The disordered stretch occupies residues 1011–1073 (YGEMGGKPED…ENENPNEEST (63 aa)). Over residues 1021–1041 (TDTEEDGDCDDEDDDNEEEES) the composition is skewed to acidic residues. A compositionally biased stretch (basic residues) spans 1050–1062 (GKSKKETKKKKKR). Helical transmembrane passes span 1084–1104 (QLSF…ICER) and 1117–1137 (VFTI…SLGY). N-linked (GlcNAc...) asparagine glycosylation occurs at asparagine 1141. Residues 1222 to 1241 (DELKHKRSLSRSSKRSTKTN) are disordered. Residues 1226–1241 (HKRSLSRSSKRSTKTN) show a composition bias toward basic residues.

The protein belongs to the TrkH potassium transport family.

It localises to the membrane. Its function is as follows. This protein is required for high-affinity potassium transport. This is High-affinity potassium transport protein (TRK1) from Saccharomyces uvarum (Yeast).